The sequence spans 362 residues: tRNA-specific 2-thiouridylase MnmA (362 aa).

Residues 6–13 and L32 each bind ATP; that span reads AMSGGVDS. C101 acts as the Nucleophile in catalysis. An intrachain disulfide couples C101 to C197. G125 is a binding site for ATP. The tract at residues 147 to 149 is interaction with tRNA; the sequence is KDQ. Catalysis depends on C197, which acts as the Cysteine persulfide intermediate.

It belongs to the MnmA/TRMU family.

The protein resides in the cytoplasm. It carries out the reaction S-sulfanyl-L-cysteinyl-[protein] + uridine(34) in tRNA + AH2 + ATP = 2-thiouridine(34) in tRNA + L-cysteinyl-[protein] + A + AMP + diphosphate + H(+). Catalyzes the 2-thiolation of uridine at the wobble position (U34) of tRNA, leading to the formation of s(2)U34. The protein is tRNA-specific 2-thiouridylase MnmA of Acidothermus cellulolyticus (strain ATCC 43068 / DSM 8971 / 11B).